The primary structure comprises 89 residues: cAMP-regulated phosphoprotein 21 (89 aa).

The tract at residues 1–89 (MSEPGDLSQT…GGESLQDQTL (89 aa)) is disordered. Ser-2 carries the post-translational modification N-acetylserine. A phosphoserine mark is found at Ser-33 and Ser-56.

Interacts with CALM1. Post-translationally, phosphorylation at Ser-56 favors interaction with CALM1.

The protein resides in the cytoplasm. In terms of biological role, may act as a competitive inhibitor of calmodulin-dependent enzymes such as calcineurin in neurons. The polypeptide is cAMP-regulated phosphoprotein 21 (ARPP21) (Bos taurus (Bovine)).